A 262-amino-acid chain; its full sequence is Small ribosomal subunit protein uS2 (262 aa).

Residues 236–262 are disordered; the sequence is AGGAAEAPAAEDVQTEEAAAPEADSAE.

It belongs to the universal ribosomal protein uS2 family.

The polypeptide is Small ribosomal subunit protein uS2 (Psychrobacter sp. (strain PRwf-1)).